Consider the following 361-residue polypeptide: Ribosomal RNA large subunit methyltransferase M (361 aa).

S-adenosyl-L-methionine-binding positions include Ser193, 226-229 (CPGG), Asp245, Asp265, and Asp283. The active-site Proton acceptor is the Lys312.

The protein belongs to the class I-like SAM-binding methyltransferase superfamily. RNA methyltransferase RlmE family. RlmM subfamily. In terms of assembly, monomer.

The protein localises to the cytoplasm. The catalysed reaction is cytidine(2498) in 23S rRNA + S-adenosyl-L-methionine = 2'-O-methylcytidine(2498) in 23S rRNA + S-adenosyl-L-homocysteine + H(+). Catalyzes the 2'-O-methylation at nucleotide C2498 in 23S rRNA. This chain is Ribosomal RNA large subunit methyltransferase M, found in Histophilus somni (strain 129Pt) (Haemophilus somnus).